Here is a 1370-residue protein sequence, read N- to C-terminus: Major capsid protein (1370 aa).

It belongs to the herpesviridae major capsid protein family. Homomultimer. Makes the hexons and eleven out of twelve pentons. Interacts with triplex proteins 1/TRX1 and 2/TRX2; adjacent capsomers are linked together in groups of three by triplexes, heterotrimeric complexes composed of one molecule of TRX1 and two molecules of TRX2. Interacts with scaffold protein; this interaction allows efficient MCP transport to the host nucleus. Interacts with capsid vertex component 2/CVC2. Interacts with the small capsomere-interacting protein/SCP.

The protein resides in the virion. The protein localises to the host nucleus. Self-assembles to form an icosahedral capsid with a T=16 symmetry, about 200 nm in diameter, and consisting of 150 hexons and 12 pentons (total of 162 capsomers). Hexons form the edges and faces of the capsid and are each composed of six MCP molecules. In contrast, one penton is found at each of the 12 vertices. Eleven of the pentons are MCP pentamers, while the last vertex is occupied by the portal complex. The capsid is surrounded by a layer of proteinaceous material designated the tegument which, in turn, is enclosed in an envelope of host cell-derived lipids containing virus-encoded glycoproteins. This is Major capsid protein from Human cytomegalovirus (strain AD169) (HHV-5).